The following is a 317-amino-acid chain: Porphobilinogen deaminase (317 aa).

S-(dipyrrolylmethanemethyl)cysteine is present on Cys-245.

This sequence belongs to the HMBS family. As to quaternary structure, monomer. Dipyrromethane serves as cofactor.

It carries out the reaction 4 porphobilinogen + H2O = hydroxymethylbilane + 4 NH4(+). It participates in porphyrin-containing compound metabolism; protoporphyrin-IX biosynthesis; coproporphyrinogen-III from 5-aminolevulinate: step 2/4. The protein operates within porphyrin-containing compound metabolism; chlorophyll biosynthesis. Tetrapolymerization of the monopyrrole PBG into the hydroxymethylbilane pre-uroporphyrinogen in several discrete steps. This is Porphobilinogen deaminase from Prochlorococcus marinus (strain MIT 9303).